The following is a 142-amino-acid chain: Large ribosomal subunit protein uL13 (142 aa).

Belongs to the universal ribosomal protein uL13 family. In terms of assembly, part of the 50S ribosomal subunit.

This protein is one of the early assembly proteins of the 50S ribosomal subunit, although it is not seen to bind rRNA by itself. It is important during the early stages of 50S assembly. The polypeptide is Large ribosomal subunit protein uL13 (Trichlorobacter lovleyi (strain ATCC BAA-1151 / DSM 17278 / SZ) (Geobacter lovleyi)).